A 620-amino-acid polypeptide reads, in one-letter code: Dihydroxy-acid dehydratase (620 aa).

Aspartate 82 contacts Mg(2+). Cysteine 123 is a [2Fe-2S] cluster binding site. The Mg(2+) site is built by aspartate 124 and lysine 125. An N6-carboxylysine modification is found at lysine 125. A [2Fe-2S] cluster-binding site is contributed by cysteine 197. Glutamate 493 lines the Mg(2+) pocket. Residue serine 519 is the Proton acceptor of the active site.

Belongs to the IlvD/Edd family. Homodimer. The cofactor is [2Fe-2S] cluster. Mg(2+) serves as cofactor.

The enzyme catalyses (2R)-2,3-dihydroxy-3-methylbutanoate = 3-methyl-2-oxobutanoate + H2O. It catalyses the reaction (2R,3R)-2,3-dihydroxy-3-methylpentanoate = (S)-3-methyl-2-oxopentanoate + H2O. The protein operates within amino-acid biosynthesis; L-isoleucine biosynthesis; L-isoleucine from 2-oxobutanoate: step 3/4. It participates in amino-acid biosynthesis; L-valine biosynthesis; L-valine from pyruvate: step 3/4. Its function is as follows. Functions in the biosynthesis of branched-chain amino acids. Catalyzes the dehydration of (2R,3R)-2,3-dihydroxy-3-methylpentanoate (2,3-dihydroxy-3-methylvalerate) into 2-oxo-3-methylpentanoate (2-oxo-3-methylvalerate) and of (2R)-2,3-dihydroxy-3-methylbutanoate (2,3-dihydroxyisovalerate) into 2-oxo-3-methylbutanoate (2-oxoisovalerate), the penultimate precursor to L-isoleucine and L-valine, respectively. The polypeptide is Dihydroxy-acid dehydratase (Bifidobacterium longum subsp. infantis (strain ATCC 15697 / DSM 20088 / JCM 1222 / NCTC 11817 / S12)).